The sequence spans 76 residues: MAGTRGLMLLGPGPVAGPRDVGTCRGRQMEIQKHKDNKKLPQGIIIVFRLQTHTTPQIYTQLKGKLRKFFKEPYSE.

The disordered stretch occupies residues 1–20 (MAGTRGLMLLGPGPVAGPRD).

This Homo sapiens (Human) protein is Protein CASC2, isoforms 1/2 (CASC2).